A 792-amino-acid polypeptide reads, in one-letter code: 5-methyltetrahydropteroyltriglutamate--homocysteine methyltransferase (792 aa).

Residues 16 to 19 and Lys-112 contribute to the 5-methyltetrahydropteroyltri-L-glutamate site; that span reads RELK. L-homocysteine-binding positions include 432 to 434 and Glu-485; that span reads IGS. L-methionine is bound by residues 432-434 and Glu-485; that span reads IGS. Residues 516 to 517 and Trp-562 each bind 5-methyltetrahydropteroyltri-L-glutamate; that span reads RC. L-homocysteine is bound at residue Asp-600. Residue Asp-600 coordinates L-methionine. Residue Glu-606 participates in 5-methyltetrahydropteroyltri-L-glutamate binding. Residues His-642, Cys-644, and Glu-666 each coordinate Zn(2+). Catalysis depends on His-695, which acts as the Proton donor. Cys-727 is a binding site for Zn(2+).

This sequence belongs to the vitamin-B12 independent methionine synthase family. It depends on Zn(2+) as a cofactor.

The catalysed reaction is 5-methyltetrahydropteroyltri-L-glutamate + L-homocysteine = tetrahydropteroyltri-L-glutamate + L-methionine. It participates in amino-acid biosynthesis; L-methionine biosynthesis via de novo pathway; L-methionine from L-homocysteine (MetE route): step 1/1. In terms of biological role, catalyzes the transfer of a methyl group from 5-methyltetrahydrofolate to homocysteine resulting in methionine formation. The sequence is that of 5-methyltetrahydropteroyltriglutamate--homocysteine methyltransferase from Cupriavidus necator (Alcaligenes eutrophus).